A 69-amino-acid polypeptide reads, in one-letter code: Fungal defensin oryzeasin (69 aa).

The signal sequence occupies residues 1-18 (MKLLTVAFSLLLLGQVHA). The propeptide occupies 19-26 (SPLVLDKR). Intrachain disulfides connect Cys-29-Cys-60, Cys-44-Cys-66, and Cys-48-Cys-68.

It belongs to the invertebrate defensin family.

It is found in the secreted. Its subcellular location is the target cell membrane. Its function is as follows. Shows antibacterial activity against numerous Gram-positive bacteria. It selectively inhibits peptidoglycan biosynthesis through complex formation with the cell wall precursor lipid II (1:1 molar ratio) thus inhibiting cell wall synthesis. This Aspergillus oryzae (strain ATCC 42149 / RIB 40) (Yellow koji mold) protein is Fungal defensin oryzeasin.